The sequence spans 404 residues: Sorting nexin-32 (404 aa).

Basic and acidic residues predominate over residues 1–10 (MEEQHQEAGN). Residues 1–29 (MEEQHQEAGNESKPSSTSVDLQGDSPLQV) form a disordered region. Residues 11–20 (ESKPSSTSVD) show a composition bias toward polar residues. The 148-residue stretch at 21 to 168 (LQGDSPLQVE…SVFLEYSQDL (148 aa)) folds into the PX domain. A coiled-coil region spans residues 255 to 336 (TQEVNQLKRS…KARTRNREVR (82 aa)).

It belongs to the sorting nexin family.

In terms of biological role, may be involved in several stages of intracellular trafficking. The polypeptide is Sorting nexin-32 (Snx32) (Mus musculus (Mouse)).